The primary structure comprises 1147 residues: MQKKRSRAGAAEQEAASDDGEMSDSSDKMEVSQNKGKSGIKRAPEADDVLRPVKLSKSDLYKPPTNDELNRLKETENLFHTNLLRMQIEELLQEVKLKEKRRKTIDGFLHEINALLGTIPETPKTDLTDQSWLSSSIKVPFLQVPYQVKGKFSFLPPSSIKVVGSYLLGTCIKPEINVDLAVTMPQEILQVKDNLNQRYSRKRALYLAHIASHLTDNKLFSSVKFTYMNSNHLKPILLLRPQGKDEKLVTVRIHICPPPGFFKLSRLYPNKNNVRTSWYTEQQTETEGVCDPPTPYYNNTILSDLTLEHHLHHLTNCATDFPGMKDAIALLKVWLHQRQLDKGFGCFNGFLASMLISYLLSKNKINKVMSGYQVLRNTLQFLATTDLTVNGITMATCSDSSLPSLPDFHEAFQVVFVDPMGVVNLCADMTASKYRQIQFEASESLKVLDDTNVNGFHLLLMVPKPFVRTFDHVFHLTNVAKLQGTCKKMKLLNQLIDRGGDYLATALPYLLSVLSKGLGPRVSLLSHTLTHKPEWNVGEEPAKHKDSGLVTVGLLLDPELYTNVLDKGPAADSSEALDFRAFWGEKSELRRFQDGSICEAVVWTGGSLYDKRKVPELIVKYLLELHANIPESCINYTGNALDCVLSRGRETSTEEEKMVSIIQSYDDLSRKLWNLNDLPLTITSVQGTHPCLRYTDVFPPLPVKPDWSSYHLLREKKCLIPNPEKPCPAYVSPVKVICHMEGSGKWPQDKDAIKRLKAAFQIRLSELLSSQHQLLCNPSATHTDVYKDGYVFRVQVAYHREPQYMKEFVTPEGMLKYQDTEESMQLEMETNHLPHLSSTLHGLHQQHPAFGGTSRLAKRWIQSQLLGDSFSEECLDLLVAHLFLHPAPYSPPSSALVGFLRFLHLVATFDWKNSPLIVNLNGELKGSEYTEIQNDFISARAQLPVMFIATPKDKKDSVWTKNQPTAQMLQRLIVLCLESLRALEQQLMDPRGNHDYKMIFRPPLDLYDVLIRLNPKQISRHREAVDQPAKSFFRGMLKEGAQVKDLMFPVVGYDPIQLFLQELREAYGEFALFFHDLHGGDVIGVLWKPSSFEPQPFKTTNVKGRQMDGKSDKALLVPNAEAFVEDLEILGEGLVAGVEAQTERWNI.

A disordered region spans residues methionine 1–valine 49. A compositionally biased stretch (acidic residues) spans alanine 15–aspartate 24.

This sequence belongs to the NRAP family. In terms of assembly, part of the small subunit (SSU) processome, composed of more than 70 proteins and the RNA chaperone small nucleolar RNA (snoRNA) U3.

Its subcellular location is the nucleus. The protein resides in the nucleolus. It localises to the chromosome. Functionally, part of the small subunit (SSU) processome, first precursor of the small eukaryotic ribosomal subunit. During the assembly of the SSU processome in the nucleolus, many ribosome biogenesis factors, an RNA chaperone and ribosomal proteins associate with the nascent pre-rRNA and work in concert to generate RNA folding, modifications, rearrangements and cleavage as well as targeted degradation of pre-ribosomal RNA by the RNA exosome. The chain is Nucleolar protein 6 (nol6) from Xenopus laevis (African clawed frog).